Consider the following 107-residue polypeptide: ATP synthase peripheral stalk subunit F6, mitochondrial (107 aa).

The transit peptide at Met-1 to Phe-31 directs the protein to the mitochondrion. An N6-acetyllysine mark is found at Lys-40, Lys-45, and Lys-78. An N6-acetyllysine; alternate mark is found at Lys-93 and Lys-98. Residues Lys-93 and Lys-98 each carry the N6-succinyllysine; alternate modification. At Lys-104 the chain carries N6-acetyllysine.

This sequence belongs to the eukaryotic ATPase subunit F6 family. In terms of assembly, component of the ATP synthase complex composed at least of ATP5F1A/subunit alpha, ATP5F1B/subunit beta, ATP5MC1/subunit c (homooctomer), MT-ATP6/subunit a, MT-ATP8/subunit 8, ATP5ME/subunit e, ATP5MF/subunit f, ATP5MG/subunit g, ATP5MK/subunit k, ATP5MJ/subunit j, ATP5F1C/subunit gamma, ATP5F1D/subunit delta, ATP5F1E/subunit epsilon, ATP5PF/subunit F6, ATP5PB/subunit b, ATP5PD/subunit d, ATP5PO/subunit OSCP. ATP synthase complex consists of a soluble F(1) head domain (subunits alpha(3) and beta(3)) - the catalytic core - and a membrane F(0) domain - the membrane proton channel (subunits c, a, 8, e, f, g, k and j). These two domains are linked by a central stalk (subunits gamma, delta, and epsilon) rotating inside the F1 region and a stationary peripheral stalk (subunits F6, b, d, and OSCP).

Its subcellular location is the mitochondrion. The protein localises to the mitochondrion inner membrane. Its function is as follows. Subunit F6, of the mitochondrial membrane ATP synthase complex (F(1)F(0) ATP synthase or Complex V) that produces ATP from ADP in the presence of a proton gradient across the membrane which is generated by electron transport complexes of the respiratory chain. ATP synthase complex consist of a soluble F(1) head domain - the catalytic core - and a membrane F(1) domain - the membrane proton channel. These two domains are linked by a central stalk rotating inside the F(1) region and a stationary peripheral stalk. During catalysis, ATP synthesis in the catalytic domain of F(1) is coupled via a rotary mechanism of the central stalk subunits to proton translocation. In vivo, can only synthesize ATP although its ATP hydrolase activity can be activated artificially in vitro. Part of the complex F(0) domain. Part of the complex F(0) domain and the peripheric stalk, which acts as a stator to hold the catalytic alpha(3)beta(3) subcomplex and subunit a/ATP6 static relative to the rotary elements. In Pongo abelii (Sumatran orangutan), this protein is ATP synthase peripheral stalk subunit F6, mitochondrial.